A 508-amino-acid polypeptide reads, in one-letter code: Light-independent protochlorophyllide reductase subunit B (508 aa).

A [4Fe-4S] cluster-binding site is contributed by D36. The active-site Proton donor is D294. 429-430 (GM) contacts substrate.

Belongs to the ChlB/BchB/BchZ family. As to quaternary structure, protochlorophyllide reductase is composed of three subunits; ChlL, ChlN and ChlB. Forms a heterotetramer of two ChlB and two ChlN subunits. Requires [4Fe-4S] cluster as cofactor.

It carries out the reaction chlorophyllide a + oxidized 2[4Fe-4S]-[ferredoxin] + 2 ADP + 2 phosphate = protochlorophyllide a + reduced 2[4Fe-4S]-[ferredoxin] + 2 ATP + 2 H2O. The protein operates within porphyrin-containing compound metabolism; chlorophyll biosynthesis (light-independent). Its function is as follows. Component of the dark-operative protochlorophyllide reductase (DPOR) that uses Mg-ATP and reduced ferredoxin to reduce ring D of protochlorophyllide (Pchlide) to form chlorophyllide a (Chlide). This reaction is light-independent. The NB-protein (ChlN-ChlB) is the catalytic component of the complex. In Picosynechococcus sp. (strain ATCC 27264 / PCC 7002 / PR-6) (Agmenellum quadruplicatum), this protein is Light-independent protochlorophyllide reductase subunit B.